An 88-amino-acid chain; its full sequence is Small ribosomal subunit protein uS19 (88 aa).

The protein belongs to the universal ribosomal protein uS19 family.

Its function is as follows. Protein S19 forms a complex with S13 that binds strongly to the 16S ribosomal RNA. In Chlamydia pneumoniae (Chlamydophila pneumoniae), this protein is Small ribosomal subunit protein uS19 (rpsS).